A 92-amino-acid polypeptide reads, in one-letter code: Kinetoplastid membrane protein 11 (92 aa).

Arg45 carries the omega-N-methylarginine modification.

It belongs to the KMP-11 family. In terms of assembly, monomer. A minor in vivo processed fragment (IVP) also exists, probably as a result of proteolysis. In terms of processing, probably O-glycosylated. Contains equimolar amounts of galactosamine, galactose, glucose and mannose. Post-translationally, the N-terminus is blocked.

The protein localises to the cytoplasm. The protein resides in the cytoskeleton. Its function is as follows. May be involved in the regulation of the cytoskeleton through interaction with the subpellicular microtubules. May be involved in parasite mobility and attachment to the surface of the host cell. Strongly stimulates T-cell proliferation and is thought to play a role in the immunology of leishmaniasis. The chain is Kinetoplastid membrane protein 11 (KMP-11) from Leishmania donovani.